The following is a 42-amino-acid chain: Delta-actinopoditoxin-Mb1a (42 aa).

Disulfide bonds link Cys-1–Cys-15, Cys-8–Cys-20, Cys-14–Cys-31, and Cys-16–Cys-42.

The protein belongs to the neurotoxin 06 (delta-actx) family. Expressed by the venom gland.

The protein resides in the secreted. In terms of biological role, neurotoxin that slows the inactivation of vertebrate tetrodotoxin-sensitive voltage-gated sodium channels (Nav) and most likely insect sodium channels presumably by binding to site 3 of the channel. Effects are an increase in resting tension, a muscle fasciculation and a decrease in indirect twitch tension. It fails to affect tetrodotoxin-resistant sodium currents. In vivo, is lethal to both vertebrates and insects. The sequence is that of Delta-actinopoditoxin-Mb1a from Missulena bradleyi (Eastern mouse spider).